Here is a 173-residue protein sequence, read N- to C-terminus: MTYLVSLLLMALIVGLIAVASNPAPYFAALGLVVAAGVGCGVLVSHGGSFLSLVLFLIYLGGMLVVFAYSAALAAEPFPEAWGDRSVVGYVMIYLLGVGLMVGVFWEGWYEGSWVVIDGLKEFSVLRGDTSGVAEMYSYGGGMLVICAWVLLLTLFVVLELTRGLSRGTIRAV.

The next 5 membrane-spanning stretches (helical) occupy residues 1–21 (MTYL…AVAS), 24–44 (APYF…GVLV), 53–73 (LVLF…SAAL), 86–106 (SVVG…GVFW), and 139–159 (YGGG…FVVL).

It belongs to the complex I subunit 6 family.

Its subcellular location is the mitochondrion membrane. It carries out the reaction a ubiquinone + NADH + 5 H(+)(in) = a ubiquinol + NAD(+) + 4 H(+)(out). In terms of biological role, core subunit of the mitochondrial membrane respiratory chain NADH dehydrogenase (Complex I) that is believed to belong to the minimal assembly required for catalysis. Complex I functions in the transfer of electrons from NADH to the respiratory chain. The immediate electron acceptor for the enzyme is believed to be ubiquinone. The sequence is that of NADH-ubiquinone oxidoreductase chain 6 (MT-ND6) from Formosania lacustris (Oriental stream loach).